Here is a 169-residue protein sequence, read N- to C-terminus: Lipoprotein signal peptidase (169 aa).

Helical transmembrane passes span 4 to 24 (PICSTGLRWLWLAVVVVILDI), 29 to 49 (WVMAHFALYESVPLIPFFNLT), 70 to 90 (WFFAGIAIGISVVLMVMMYRS), and 101 to 121 (YALIIGGALGNLYDRLVHGAV). Active-site residues include aspartate 123 and aspartate 141. Residues 137–157 (FNLADVAICIGAALVIFEGFL) form a helical membrane-spanning segment.

This sequence belongs to the peptidase A8 family.

It localises to the cell inner membrane. It catalyses the reaction Release of signal peptides from bacterial membrane prolipoproteins. Hydrolyzes -Xaa-Yaa-Zaa-|-(S,diacylglyceryl)Cys-, in which Xaa is hydrophobic (preferably Leu), and Yaa (Ala or Ser) and Zaa (Gly or Ala) have small, neutral side chains.. Its pathway is protein modification; lipoprotein biosynthesis (signal peptide cleavage). Functionally, this protein specifically catalyzes the removal of signal peptides from prolipoproteins. This chain is Lipoprotein signal peptidase, found in Yersinia pestis bv. Antiqua (strain Antiqua).